The sequence spans 110 residues: Nucleoid-associated protein RALTA_A1934 (110 aa).

A compositionally biased stretch (polar residues) spans 88 to 98 (TTQEKMGSMTS). The interval 88–110 (TTQEKMGSMTSGLPLPPGFKLPF) is disordered. A compositionally biased stretch (pro residues) spans 101–110 (PLPPGFKLPF).

Belongs to the YbaB/EbfC family. In terms of assembly, homodimer.

It is found in the cytoplasm. The protein localises to the nucleoid. In terms of biological role, binds to DNA and alters its conformation. May be involved in regulation of gene expression, nucleoid organization and DNA protection. The polypeptide is Nucleoid-associated protein RALTA_A1934 (Cupriavidus taiwanensis (strain DSM 17343 / BCRC 17206 / CCUG 44338 / CIP 107171 / LMG 19424 / R1) (Ralstonia taiwanensis (strain LMG 19424))).